Reading from the N-terminus, the 127-residue chain is Large ribosomal subunit protein bL12 (127 aa).

The protein belongs to the bacterial ribosomal protein bL12 family. In terms of assembly, homodimer. Part of the ribosomal stalk of the 50S ribosomal subunit. Forms a multimeric L10(L12)X complex, where L10 forms an elongated spine to which 2 to 4 L12 dimers bind in a sequential fashion. Binds GTP-bound translation factors.

Forms part of the ribosomal stalk which helps the ribosome interact with GTP-bound translation factors. Is thus essential for accurate translation. The protein is Large ribosomal subunit protein bL12 of Streptomyces griseus subsp. griseus (strain JCM 4626 / CBS 651.72 / NBRC 13350 / KCC S-0626 / ISP 5235).